The chain runs to 140 residues: Transcriptional regulator YdaT (140 aa).

Its function is as follows. Transcriptional regulator that causes a severe detrimental growth effect and reduces cell viability. When expressed, it alters expression of a variety of bacterial regulons normally controlled by the transcriptional regulatory protein RcsA, resulting in deficient lipopolysaccharide biosynthesis and cell division. YdaT has no effect on Rac prophage excision. Overexpression of ydaST reduces growth and leads to loss of cell viability. May contribute to toxicity and morphological defects. This Escherichia coli (strain K12) protein is Transcriptional regulator YdaT (ydaT).